The chain runs to 678 residues: Dihydroxyacetone phosphate acyltransferase (678 aa).

Ser-12 and Ser-17 each carry phosphoserine. Residues 161–166 (HRSYID) carry the HXXXXD motif motif. Lys-641 carries the post-translational modification N6-acetyllysine. The short motif at 676 to 678 (AKL) is the Microbody targeting signal element.

The protein belongs to the GPAT/DAPAT family. In terms of assembly, part of a heterotrimeric complex composed of GNPAT, AGPS and a modified form of GNPAT. In terms of tissue distribution, highly expressed in liver and testis. Lower levels in heart, brain, lung and kidney. Detected in spleen.

Its subcellular location is the peroxisome membrane. It catalyses the reaction dihydroxyacetone phosphate + an acyl-CoA = a 1-acylglycerone 3-phosphate + CoA. The catalysed reaction is dihydroxyacetone phosphate + hexadecanoyl-CoA = 1-hexadecanoylglycerone 3-phosphate + CoA. The protein operates within membrane lipid metabolism; glycerophospholipid metabolism. In terms of biological role, dihydroxyacetonephosphate acyltransferase catalyzing the first step in the biosynthesis of plasmalogens, a subset of phospholipids that differ from other glycerolipids by having an alkyl chain attached through a vinyl ether linkage at the sn-1 position of the glycerol backbone, and which unique physical properties have an impact on various aspects of cell signaling and membrane biology. The sequence is that of Dihydroxyacetone phosphate acyltransferase from Mus musculus (Mouse).